The sequence spans 455 residues: Chromosomal replication initiator protein DnaA (455 aa).

The segment at 1 to 74 is domain I, interacts with DnaA modulators; the sequence is MFDIEKFWQH…IQSAYGYAGI (74 aa). The domain II stretch occupies residues 74 to 117; it reads IEILPVFQINENNDSPERIVTPEPRYAIQLQQEKRAHKQFTKNL. Residues 118-334 are domain III, AAA+ region; the sequence is KLNEKYTFDN…GALVKVQAYA (217 aa). Residues glycine 162, glycine 164, lysine 165, and threonine 166 each coordinate ATP. Residues 335–455 form a domain IV, binds dsDNA region; that stretch reads TIERADINVN…VFDLKQMIEH (121 aa).

This sequence belongs to the DnaA family. In terms of assembly, oligomerizes as a right-handed, spiral filament on DNA at oriC.

The protein localises to the cytoplasm. In terms of biological role, plays an essential role in the initiation and regulation of chromosomal replication. ATP-DnaA binds to the origin of replication (oriC) to initiate formation of the DNA replication initiation complex once per cell cycle. Binds the DnaA box (a 9 base pair repeat at the origin) and separates the double-stranded (ds)DNA. Forms a right-handed helical filament on oriC DNA; dsDNA binds to the exterior of the filament while single-stranded (ss)DNA is stabiized in the filament's interior. The ATP-DnaA-oriC complex binds and stabilizes one strand of the AT-rich DNA unwinding element (DUE), permitting loading of DNA polymerase. After initiation quickly degrades to an ADP-DnaA complex that is not apt for DNA replication. Binds acidic phospholipids. The chain is Chromosomal replication initiator protein DnaA from Lactobacillus helveticus (strain DPC 4571).